The following is a 312-amino-acid chain: tRNA-cytidine(32) 2-sulfurtransferase (312 aa).

Residues 39-44 carry the PP-loop motif motif; the sequence is SGGKDS. [4Fe-4S] cluster is bound by residues cysteine 114, cysteine 117, and cysteine 205.

Belongs to the TtcA family. Homodimer. Mg(2+) serves as cofactor. Requires [4Fe-4S] cluster as cofactor.

It localises to the cytoplasm. It carries out the reaction cytidine(32) in tRNA + S-sulfanyl-L-cysteinyl-[cysteine desulfurase] + AH2 + ATP = 2-thiocytidine(32) in tRNA + L-cysteinyl-[cysteine desulfurase] + A + AMP + diphosphate + H(+). The protein operates within tRNA modification. In terms of biological role, catalyzes the ATP-dependent 2-thiolation of cytidine in position 32 of tRNA, to form 2-thiocytidine (s(2)C32). The sulfur atoms are provided by the cysteine/cysteine desulfurase (IscS) system. The polypeptide is tRNA-cytidine(32) 2-sulfurtransferase (Ralstonia nicotianae (strain ATCC BAA-1114 / GMI1000) (Ralstonia solanacearum)).